Here is a 963-residue protein sequence, read N- to C-terminus: Unconventional myosin-XIX (963 aa).

The Myosin motor domain occupies 35–758 (HQLDDLTKVN…MLELLECGRA (724 aa)). Position 132-139 (132-139 (GESGAGKT)) interacts with ATP. The interval 602–624 (LEQLLQVLHNTTPHYIRCIKPNS) is actin-binding. 2 IQ domains span residues 762 to 782 (EQCA…KQEK) and 783 to 812 (QRRA…AATV). The segment at 829–963 (SKELDGMEEK…LLESHRPVQV (135 aa)) is myMOMA region.

This sequence belongs to the TRAFAC class myosin-kinesin ATPase superfamily. Myosin family. As to quaternary structure, myosin is a hexamer of 2 heavy chains and 4 light chains: interacts with myosin light chains MYL9 and MYL12B.

It localises to the mitochondrion outer membrane. The protein resides in the cytoplasm. Its subcellular location is the cytoskeleton. In terms of biological role, actin-based motor molecule with ATPase activity that localizes to the mitochondrion outer membrane. Motor protein that moves towards the plus-end of actin filaments. Required for mitochondrial inheritance during mitosis. May be involved in mitochondrial transport or positioning. This Mus musculus (Mouse) protein is Unconventional myosin-XIX.